The following is a 61-amino-acid chain: Large ribosomal subunit protein eL24 (61 aa).

Cys7, Cys10, Cys33, and Cys37 together coordinate Zn(2+). The C4-type zinc-finger motif lies at 7–37 (CSFCGKEIPPATGLMYIRNDGSILWFCSNKC).

It belongs to the eukaryotic ribosomal protein eL24 family. In terms of assembly, part of the 50S ribosomal subunit. Forms a cluster with proteins L3 and L14. Zn(2+) serves as cofactor.

Its function is as follows. Binds to the 23S rRNA. In Sulfurisphaera tokodaii (strain DSM 16993 / JCM 10545 / NBRC 100140 / 7) (Sulfolobus tokodaii), this protein is Large ribosomal subunit protein eL24.